The primary structure comprises 87 residues: Cytochrome c5 (87 aa).

Heme contacts are provided by C19, C22, H23, and M63. A disulfide bridge connects residues C69 and C72.

Belongs to the cytochrome c family. Homodimer. Binds 1 heme group per subunit.

Functionally, it is unreactive with cytochrome c reductase or oxidase but seems to function as an intermediate in nitrate respiration of facultative anaerobic pseudmonads. This chain is Cytochrome c5, found in Ectopseudomonas mendocina (Pseudomonas mendocina).